Consider the following 772-residue polypeptide: MMEELHSLDPRRQELLEARFTGVGVSKGPLNSESSNQSLCSVGSLSDKEVETPEKKQNDQRNRKRKAEPYETSQGKGTPRGHKISDYFEFAGGSAPGTSPGRSVPPVARSSPQHSLSNPLPRRVEQPLYGLDGSAAKEATEEQSALPTLMSVMLAKPRLDTEQLAQRGAGLCFTFVSAQQNSPSSTGSGNTEHSCSSQKQISIQHRQTQSDLTIEKISALENSKNSDLEKKEGRIDDLLRANCDLRRQIDEQQKMLEKYKERLNRCVTMSKKLLIEKSKQEKMACRDKSMQDRLRLGHFTTVRHGASFTEQWTDGYAFQNLIKQQERINSQREEIERQRKMLAKRKPPAMGQAPPATNEQKQRKSKTNGAENETPSSGNTELKDTAPALGAHSLLRLTLAEYHEQEEIFKLRLGHLKKEEAEIQAELERLERVRNLHIRELKRIHNEDNSQFKDHPTLNDRYLLLHLLGRGGFSEVYKAFDLTEQRYVAVKIHQLNKNWRDEKKENYHKHACREYRIHKELDHPRIVKLYDYFSLDTDSFCTVLEYCEGNDLDFYLKQHKLMSEKEARSIIMQIVNALKYLNEIKPPIIHYDLKPGNILLVNGTACGEIKITDFGLSKIMDDDSYNSVDGMELTSQGAGTYWYLPPECFVVGKEPPKISNKVDVWSVGVIFYQCLYGRKPFGHNQSQQDILQENTILKATEVQFPPKPVVTPEAKAFIRRCLAYRKEDRIDVQQLACDPYLLPHIRKSVSTSSPAGAAIASTSGASNNSSSN.

The disordered stretch occupies residues 24–126; sequence GVSKGPLNSE…SNPLPRRVEQ (103 aa). Residues 29 to 44 show a composition bias toward polar residues; it reads PLNSESSNQSLCSVGS. The span at 46-61 shows a compositional bias: basic and acidic residues; it reads SDKEVETPEKKQNDQR. Residues Ser-73, Ser-94, Ser-99, Ser-115, Ser-117, and Ser-134 each carry the phosphoserine modification. The interval 180–208 is disordered; that stretch reads QNSPSSTGSGNTEHSCSSQKQISIQHRQT. A required for interaction with TLK1 and DYNLL1/LC8 region spans residues 225–276; sequence NSDLEKKEGRIDDLLRANCDLRRQIDEQQKMLEKYKERLNRCVTMSKKLLIE. Coiled coils occupy residues 225-276 and 317-347; these read NSDL…LLIE and AFQN…KRKP. The segment at 342–385 is disordered; that stretch reads LAKRKPPAMGQAPPATNEQKQRKSKTNGAENETPSSGNTELKDT. Residues 367–380 are compositionally biased toward polar residues; sequence TNGAENETPSSGNT. Positions 403-451 form a coiled coil; it reads HEQEEIFKLRLGHLKKEEAEIQAELERLERVRNLHIRELKRIHNEDNSQ. In terms of domain architecture, Protein kinase spans 462-741; that stretch reads YLLLHLLGRG…VQQLACDPYL (280 aa). Residues 468-476 and Lys-491 contribute to the ATP site; that span reads LGRGGFSEV. Asp-592 acts as the Proton acceptor in catalysis. The residue at position 750 (Ser-750) is a Phosphoserine; by CHEK1.

It belongs to the protein kinase superfamily. Ser/Thr protein kinase family. As to quaternary structure, monomer. May form homodimers; homodimerization may enhance autophosphoylation and enzymatic activity. Heterodimer with TLK1. Interacts with YWHAZ; association with 14-3-3 proteins such as YWHAZ regulates subcellular location. May also interact with FEZ1/LZTS1 and FEZ2. Interacts with CHD7 and CHD8. Interacts with DYNLL1/LC8. It depends on Mg(2+) as a cofactor. In terms of processing, phosphorylated at Ser-750, probably by CHEK1. Autophosphorylated; phosphorylation promotes the assembly of higher order oligomers and enzymatic activity. In terms of tissue distribution, detected in placenta, fetal liver, kidney, pancreas, heart and skeletal muscle. Highly expressed in testis. Detected in spleen, thymus, colon, ovary, small intestine, prostate and peripheral blood leukocytes. Almost undetectable in liver and lung.

The protein resides in the nucleus. It localises to the nucleoplasm. The protein localises to the cytoplasm. It is found in the perinuclear region. Its subcellular location is the cytoskeleton. It catalyses the reaction L-seryl-[protein] + ATP = O-phospho-L-seryl-[protein] + ADP + H(+). The enzyme catalyses L-threonyl-[protein] + ATP = O-phospho-L-threonyl-[protein] + ADP + H(+). Its activity is regulated as follows. Cell cycle-regulated, with maximal activity in the S-phase. Rapidly and transiently inhibited by phosphorylation following the generation of DNA double-stranded breaks during S-phase, probably by CHEK1, possibly at Ser-750. This inhibition is cell cycle checkpoint- and ATM-dependent. Its function is as follows. Serine/threonine-protein kinase involved in the process of chromatin assembly and probably also DNA replication, transcription, repair, and chromosome segregation. Phosphorylates the chromatin assembly factors ASF1A and ASF1B. Phosphorylation of ASF1A prevents its proteasome-mediated degradation, thereby enhancing chromatin assembly. Negative regulator of amino acid starvation-induced autophagy. The chain is Serine/threonine-protein kinase tousled-like 2 from Homo sapiens (Human).